We begin with the raw amino-acid sequence, 167 residues long: UTP pyrophosphatase (167 aa).

The enzyme catalyses UTP + H2O = UMP + diphosphate + H(+). Its function is as follows. Specifically catalyzes the hydrolysis of UTP to UMP and diphosphate in vitro, albeit at apparently slow rate. Shows no activity towards ATP, GTP, CTP, dTTP and ITP as substrates. The protein is UTP pyrophosphatase of Escherichia coli (strain K12).